The primary structure comprises 466 residues: Glutamate--tRNA ligase 2 (466 aa).

The short motif at 9–19 (PSPTGYLHVGG) is the 'HIGH' region element. The 'KMSKS' region signature appears at 234 to 238 (PLSKR). Residue Lys-237 coordinates ATP.

It belongs to the class-I aminoacyl-tRNA synthetase family. Glutamate--tRNA ligase type 1 subfamily. In terms of assembly, monomer.

It localises to the cytoplasm. The catalysed reaction is tRNA(Glu) + L-glutamate + ATP = L-glutamyl-tRNA(Glu) + AMP + diphosphate. In terms of biological role, catalyzes the attachment of glutamate to tRNA(Glu) in a two-step reaction: glutamate is first activated by ATP to form Glu-AMP and then transferred to the acceptor end of tRNA(Glu). This chain is Glutamate--tRNA ligase 2, found in Pseudothermotoga lettingae (strain ATCC BAA-301 / DSM 14385 / NBRC 107922 / TMO) (Thermotoga lettingae).